The sequence spans 175 residues: Sec-independent protein translocase protein TatB (175 aa).

A helical membrane pass occupies residues 1 to 21 (MLDLGLSKMALIGVVALVVLG). Residues 155–175 (SGAARVARHQPASLRRPTRFF) are disordered.

Belongs to the TatB family. The Tat system comprises two distinct complexes: a TatABC complex, containing multiple copies of TatA, TatB and TatC subunits, and a separate TatA complex, containing only TatA subunits. Substrates initially bind to the TatABC complex, which probably triggers association of the separate TatA complex to form the active translocon.

The protein localises to the cell inner membrane. Part of the twin-arginine translocation (Tat) system that transports large folded proteins containing a characteristic twin-arginine motif in their signal peptide across membranes. Together with TatC, TatB is part of a receptor directly interacting with Tat signal peptides. TatB may form an oligomeric binding site that transiently accommodates folded Tat precursor proteins before their translocation. This Burkholderia lata (strain ATCC 17760 / DSM 23089 / LMG 22485 / NCIMB 9086 / R18194 / 383) protein is Sec-independent protein translocase protein TatB.